The sequence spans 391 residues: Succinate--CoA ligase [ADP-forming] subunit beta (391 aa).

Positions 9–246 constitute an ATP-grasp domain; sequence KHLFTEAGIA…LTQEDETEVR (238 aa). ATP is bound by residues lysine 46, 53 to 55, glutamate 99, leucine 102, and glutamate 107; that span reads GRG. Residues asparagine 199 and aspartate 213 each contribute to the Mg(2+) site. Substrate is bound by residues asparagine 266 and 323-325; that span reads GIV.

This sequence belongs to the succinate/malate CoA ligase beta subunit family. In terms of assembly, heterotetramer of two alpha and two beta subunits. The cofactor is Mg(2+).

It carries out the reaction succinate + ATP + CoA = succinyl-CoA + ADP + phosphate. The enzyme catalyses GTP + succinate + CoA = succinyl-CoA + GDP + phosphate. It participates in carbohydrate metabolism; tricarboxylic acid cycle; succinate from succinyl-CoA (ligase route): step 1/1. Functionally, succinyl-CoA synthetase functions in the citric acid cycle (TCA), coupling the hydrolysis of succinyl-CoA to the synthesis of either ATP or GTP and thus represents the only step of substrate-level phosphorylation in the TCA. The beta subunit provides nucleotide specificity of the enzyme and binds the substrate succinate, while the binding sites for coenzyme A and phosphate are found in the alpha subunit. The chain is Succinate--CoA ligase [ADP-forming] subunit beta from Halorhodospira halophila (strain DSM 244 / SL1) (Ectothiorhodospira halophila (strain DSM 244 / SL1)).